The sequence spans 131 residues: Putative pre-16S rRNA nuclease (131 aa).

Belongs to the YqgF nuclease family.

Its subcellular location is the cytoplasm. Its function is as follows. Could be a nuclease involved in processing of the 5'-end of pre-16S rRNA. The chain is Putative pre-16S rRNA nuclease from Bordetella avium (strain 197N).